The chain runs to 500 residues: Aspartyl/glutamyl-tRNA(Asn/Gln) amidotransferase subunit B (500 aa).

This sequence belongs to the GatB/GatE family. GatB subfamily. As to quaternary structure, heterotrimer of A, B and C subunits.

It catalyses the reaction L-glutamyl-tRNA(Gln) + L-glutamine + ATP + H2O = L-glutaminyl-tRNA(Gln) + L-glutamate + ADP + phosphate + H(+). The enzyme catalyses L-aspartyl-tRNA(Asn) + L-glutamine + ATP + H2O = L-asparaginyl-tRNA(Asn) + L-glutamate + ADP + phosphate + 2 H(+). Allows the formation of correctly charged Asn-tRNA(Asn) or Gln-tRNA(Gln) through the transamidation of misacylated Asp-tRNA(Asn) or Glu-tRNA(Gln) in organisms which lack either or both of asparaginyl-tRNA or glutaminyl-tRNA synthetases. The reaction takes place in the presence of glutamine and ATP through an activated phospho-Asp-tRNA(Asn) or phospho-Glu-tRNA(Gln). This chain is Aspartyl/glutamyl-tRNA(Asn/Gln) amidotransferase subunit B, found in Thermosynechococcus vestitus (strain NIES-2133 / IAM M-273 / BP-1).